A 591-amino-acid chain; its full sequence is CDK5RAP3 protein homolog (591 aa).

Over residues 232-250 (RAGAPSSAKGPASSASAPP) the composition is skewed to low complexity. 2 disordered regions span residues 232 to 252 (RAGA…PPAL) and 269 to 303 (TAPP…DAGG). A compositionally biased stretch (gly residues) spans 279–303 (AGAGASGQGGGIEIDWGDSGGDAGG). 3 short sequence motifs (shuffled ATG8-binding motif) span residues 311–314 (IDWD), 334–337 (INWD), and 369–372 (IDWD). Residues 386 to 401 (NNRAGDVAEGEAAASL) are compositionally biased toward low complexity. Residues 386-416 (NNRAGDVAEGEAAASLSGGGGGGASSGDPDD) are disordered.

The protein belongs to the CDK5RAP3 family. As to quaternary structure, substrate adapter component of the UFM1 ribosome E3 ligase (UREL) complex. Interacts with ATG8 family proteins.

Substrate adapter of E3 ligase complexes mediating ufmylation, the covalent attachment of the ubiquitin-like modifier UFM1 to substrate proteins, and which is involved in various processes, such as ribosome recycling and reticulophagy (also called ER-phagy). This is CDK5RAP3 protein homolog from Chlamydomonas reinhardtii (Chlamydomonas smithii).